A 427-amino-acid chain; its full sequence is Queuine tRNA-ribosyltransferase catalytic subunit (427 aa).

The active-site Proton acceptor is the D99. Substrate contacts are provided by residues 99–103 (DSGGF), D153, Q196, and G223. Residues 254–260 (GVGFAAD) are RNA binding. D273 (nucleophile) is an active-site residue. Residues 278–282 (TRTAR) are RNA binding; important for wobble base 34 recognition. C311, C313, C316, and H341 together coordinate Zn(2+). Residues 395–427 (PADPERIDEQDQKPKTEKRRETEDVAEEQVASS) form a disordered region. Over residues 397 to 417 (DPERIDEQDQKPKTEKRRETE) the composition is skewed to basic and acidic residues.

This sequence belongs to the queuine tRNA-ribosyltransferase family. Heterodimer of a catalytic subunit and an accessory subunit. Zn(2+) serves as cofactor.

It is found in the cytoplasm. The catalysed reaction is guanosine(34) in tRNA + queuine = queuosine(34) in tRNA + guanine. Its function is as follows. Catalytic subunit of the queuine tRNA-ribosyltransferase (TGT) that catalyzes the base-exchange of a guanine (G) residue with queuine (Q) at position 34 (anticodon wobble position) in tRNAs with GU(N) anticodons (tRNA-Asp, -Asn, -His and -Tyr), resulting in the hypermodified nucleoside queuosine (7-(((4,5-cis-dihydroxy-2-cyclopenten-1-yl)amino)methyl)-7-deazaguanosine). Catalysis occurs through a double-displacement mechanism. The nucleophile active site attacks the C1' of nucleotide 34 to detach the guanine base from the RNA, forming a covalent enzyme-RNA intermediate. The proton acceptor active site deprotonates the incoming queuine, allowing a nucleophilic attack on the C1' of the ribose to form the product. This chain is Queuine tRNA-ribosyltransferase catalytic subunit (Tgt), found in Drosophila melanogaster (Fruit fly).